The sequence spans 142 residues: MFIGEYQHSLDSKNRMIVPVKLREDLGEKFVITKGLDGCIYAYTINEWGILENKLKTLPLTNRDARAFVRFFFSGACIVELDKQGRGLIPQNLKEYAGIEKDIVSIGVLSRVEIWSREKWSNYNESDIDYDLIAEKMNDLGI.

SpoVT-AbrB domains lie at 5 to 47 (EYQH…TINE) and 76 to 119 (ACIV…SREK).

This sequence belongs to the MraZ family. As to quaternary structure, forms oligomers.

It localises to the cytoplasm. Its subcellular location is the nucleoid. In Clostridium botulinum (strain Alaska E43 / Type E3), this protein is Transcriptional regulator MraZ.